A 464-amino-acid polypeptide reads, in one-letter code: NADH-quinone oxidoreductase subunit N 1 (464 aa).

Helical transmembrane passes span 6–26 (ILPEAILAIGILTVFILELFL), 33–53 (FLSVLAFIFVVLSGYSIFFVN), 65–85 (VDALNLIGKLFILAVTGFVLL), 98–118 (YGELPYLYLIATLGLMVMISS), 122–142 (AIIFTGLELASITMYILVGLF), 155–175 (YLVIGTTGTSMYALGSALVYA), 192–212 (FALGVILIISALALKVSAVPF), 237–257 (IGMYFLFVKLTMYLFSAFPDW), 259–279 (YVVMLLAVLSMFYGNIVAYAQ), 285–305 (LLAYSSIAHAGYFLTALTAVD), 312–332 (LLFYVFVYALATVGAFTVLAI), 356–376 (LASMLALFLFALIGIPPAAVF), 401–421 (ASLISAGYYLKVIVYMFLYSG), and 436–456 (FTVLGTAFLVIFFGLFPHVVL).

It belongs to the complex I subunit 2 family. In terms of assembly, NDH-1 is composed of 14 different subunits. Subunits NuoA, H, J, K, L, M, N constitute the membrane sector of the complex.

The protein resides in the cell inner membrane. The catalysed reaction is a quinone + NADH + 5 H(+)(in) = a quinol + NAD(+) + 4 H(+)(out). NDH-1 shuttles electrons from NADH, via FMN and iron-sulfur (Fe-S) centers, to quinones in the respiratory chain. The immediate electron acceptor for the enzyme in this species is believed to be ubiquinone. Couples the redox reaction to proton translocation (for every two electrons transferred, four hydrogen ions are translocated across the cytoplasmic membrane), and thus conserves the redox energy in a proton gradient. The chain is NADH-quinone oxidoreductase subunit N 1 from Aquifex aeolicus (strain VF5).